Consider the following 172-residue polypeptide: Bifunctional protein PyrR (172 aa).

The PRPP-binding signature appears at 90–102 (LVLIDDVLMSGRT).

Belongs to the purine/pyrimidine phosphoribosyltransferase family. PyrR subfamily.

The enzyme catalyses UMP + diphosphate = 5-phospho-alpha-D-ribose 1-diphosphate + uracil. Its function is as follows. Regulates the transcription of the pyrimidine nucleotide (pyr) operon in response to exogenous pyrimidines. Functionally, also displays a weak uracil phosphoribosyltransferase activity which is not physiologically significant. The polypeptide is Bifunctional protein PyrR (Pseudomonas putida (strain W619)).